The following is a 249-amino-acid chain: MSVTMRQMLEAGCHFGHQTRFWSPKMAPFIFGHRNKIHIINLEKTLPMFQDALKFAKQVASNRGTILFVGTKRQSREIIAEEAARAGMPYIDSRWLGGTLTNFKTVKGSLKRLKDMAVAKEAGDWEKLSKKEALTNDRDLDKLQKALGGIQDLNGVPDAIFVVDVGYHKIAITEANKLGIPVIAVVDTNHSPEGVDYIIPGNDDSSKAVLLYARGIADAILEGKANSVQEILTAVKEGEEEFVEEGKAE.

The protein belongs to the universal ribosomal protein uS2 family.

In Polynucleobacter asymbioticus (strain DSM 18221 / CIP 109841 / QLW-P1DMWA-1) (Polynucleobacter necessarius subsp. asymbioticus), this protein is Small ribosomal subunit protein uS2.